The chain runs to 165 residues: Type VI lipase immunity protein Tli3 (165 aa).

The N-terminal stretch at 1–21 is a signal peptide; sequence MKCKTLLIACLFGLGSAQALA.

In terms of assembly, interacts with the Tle3 toxin.

It localises to the periplasm. Its function is as follows. Immunity protein that neutralizes the toxicity of the P.aeruginosa antibacterial toxin Tle3 in the periplasm to protect the cell from fratricide intoxication. The chain is Type VI lipase immunity protein Tli3 from Pseudomonas aeruginosa (strain ATCC 15692 / DSM 22644 / CIP 104116 / JCM 14847 / LMG 12228 / 1C / PRS 101 / PAO1).